A 342-amino-acid polypeptide reads, in one-letter code: MTVRVAVAGASGYAGGELLRLLLSHPEVEIGALTAGGNAGSELGAHHPNLLPLADRVLADTTTAQLSGHDVVFLALPHGHSAAIAAELGDDTVVIDCGADHRLNDPTDWARWYGGEHPGTWPYGIPELPGLRERLTGARRVAVPGCFPTVSSLTIAPALAAGLVDPEVVVVAVTGTSGAGRALKPHLLSAEVMGSASVYGVGGAHRHTPELIQNLSAAGGEPVRVSFTPVLAPMARGILATCSAALRADTDAEAVRKVYLDAYGDEPFVHVLPEGTWPQTSATLGANTVHLQVTVDDDAGRLVAVGAVDNLTKGTAGAAVQCMNLALGLPETTGLPLVGVAP.

Cys146 is a catalytic residue.

The protein belongs to the NAGSA dehydrogenase family. Type 1 subfamily.

The protein localises to the cytoplasm. It carries out the reaction N-acetyl-L-glutamate 5-semialdehyde + phosphate + NADP(+) = N-acetyl-L-glutamyl 5-phosphate + NADPH + H(+). It participates in amino-acid biosynthesis; L-arginine biosynthesis; N(2)-acetyl-L-ornithine from L-glutamate: step 3/4. Catalyzes the NADPH-dependent reduction of N-acetyl-5-glutamyl phosphate to yield N-acetyl-L-glutamate 5-semialdehyde. This Saccharopolyspora erythraea (strain ATCC 11635 / DSM 40517 / JCM 4748 / NBRC 13426 / NCIMB 8594 / NRRL 2338) protein is N-acetyl-gamma-glutamyl-phosphate reductase.